The following is a 2285-amino-acid chain: AT-rich interactive domain-containing protein 1A (2285 aa).

Low complexity predominate over residues 1–14; sequence MAAQVAPAAASSLG. 2 disordered regions span residues 1–820 and 978–1005; these read MAAQ…ALPN and ATKM…TTTN. N-acetylalanine is present on alanine 2. Over residues 23-35 the composition is skewed to basic and acidic residues; the sequence is ELKKAEQQQREEA. Serine 58 and serine 79 each carry phosphoserine. 2 stretches are compositionally biased toward gly residues: residues 79 to 95 and 121 to 130; these read SNGG…GGPG and PGGGGGGSSD. 3 stretches are compositionally biased toward low complexity: residues 131-142, 212-221, and 228-265; these read GVGAPPHSAAAA, YNSYYPNRSA, and AYAL…SSSS. Serine 233 is subject to Phosphoserine. A compositionally biased stretch (gly residues) spans 273–286; that stretch reads AMGGGGPSAAGGGT. Threonine 286 carries the phosphothreonine modification. An LXXLL motif is present at residues 295-299; sequence LNQLL. Polar residues predominate over residues 295 to 306; sequence LNQLLTSPSSAR. Serine 301 bears the Phosphoserine mark. A compositionally biased stretch (gly residues) spans 310 to 327; it reads GYPGGDYSGGPQDGGAGK. Residues 338-353 are compositionally biased toward low complexity; the sequence is GAAAAAAAAAAASGGA. A phosphoserine mark is found at serine 363 and serine 382. Over residues 400-425 the composition is skewed to low complexity; the sequence is PYSQQQGPPSGPQQGHGYPGQPYGSQ. Asymmetric dimethylarginine is present on arginine 429. Low complexity-rich tracts occupy residues 447–457, 465–546, and 553–595; these read YTQQIPPYGQQ, QGQT…QHPQ, and QPQA…YSQQ. Serine 604 is subject to Phosphoserine. Residues 610 to 621 are compositionally biased toward low complexity; that stretch reads SQASSAPSMTSS. Residues 628 to 637 show a composition bias toward polar residues; it reads MNLSLQSRPS. A compositionally biased stretch (low complexity) spans 658 to 674; that stretch reads SPGVSTSGISSSQGEQS. Over residues 675-685 the composition is skewed to polar residues; sequence NPAQSPFSPHT. Residues serine 696, serine 698, serine 702, serine 730, serine 764, and serine 772 each carry the phosphoserine modification. Composition is skewed to polar residues over residues 730–747 and 755–793; these read SGQS…SSIA and RNPQ…QNSM. The segment covering 797 to 807 has biased composition (gly residues); that stretch reads GPQGGQYGPQG. Positions 808–820 are enriched in low complexity; that stretch reads GYPRQPNYNALPN. An ARID domain is found at 1017 to 1108; that stretch reads EPERKMWVDR…CLYAFECKIE (92 aa). 2 disordered regions span residues 1113–1483 and 1539–1603; these read PPPD…MMGG and ANHE…SPSK. Low complexity predominate over residues 1141–1154; that stretch reads MQGPQTPQSTSSSM. A compositionally biased stretch (pro residues) spans 1162-1177; the sequence is PPTPASTPHSQIPPLP. Position 1184 is a phosphoserine (serine 1184). Positions 1194–1219 are enriched in polar residues; sequence GSDSTFQKRNSMTPNPGYQPSMNTSD. Residue serine 1235 is modified to Phosphoserine. Position 1276 is an omega-N-methylarginine (arginine 1276). Polar residues-rich tracts occupy residues 1299–1315 and 1339–1356; these read NMST…SNPD and YGNQ…PFPS. Over residues 1357 to 1367 the composition is skewed to low complexity; it reads QQTTMYQQQQQ. The short motif at 1368-1387 is the Nuclear localization signal element; sequence NYKRPMDGTYGPPAKRHEGE. Low complexity predominate over residues 1396 to 1425; that stretch reads GQGQPQQQQLPPAQPQPASQQQAAQPSPQQ. The span at 1468-1477 shows a compositional bias: polar residues; the sequence is PGTNAQQNMP. Pro residues predominate over residues 1554-1577; that stretch reads PYGPSAPVPPMTRPPPSNYQPPPS. Serine 1604 bears the Phosphoserine mark. Lysine 1612 carries the N6-acetyllysine modification. Positions 1709-1713 match the LXXLL motif; the sequence is LPGLL. Disordered regions lie at residues 1747–1774 and 1859–1907; these read PGRF…PKLE and FESK…EKRI. Residues serine 1751 and serine 1754 each carry the phosphoserine modification. A compositionally biased stretch (acidic residues) spans 1761-1774; sequence GGEEEEELLGPKLE. The span at 1886–1895 shows a compositional bias: low complexity; that stretch reads EGTPGTTDQE. Threonine 1888 bears the Phosphothreonine mark. Residue lysine 1905 is modified to N6-acetyllysine. Residues serine 1929 and serine 1944 each carry the phosphoserine modification. Short sequence motifs (LXXLL) lie at residues 1967–1971 and 2085–2089; these read LCTLL and LDGLL.

Component of SWI/SNF chromatin remodeling complexes, in some of which it can be mutually exclusive with ARID1B/BAF250B. The canonical complex contains a catalytic subunit (either SMARCA4/BRG1/BAF190A or SMARCA2/BRM/BAF190B) and at least SMARCE1, ACTL6A/BAF53, SMARCC1/BAF155, SMARCC2/BAF170, and SMARCB1/SNF5/BAF47. Other subunits specific to each of the complexes may also be present permitting several possible combinations developmentally and tissue specific. Component of the BAF (SWI/SNF-A) complex, which includes at least actin (ACTB), ARID1A/BAF250A, ARID1B/BAF250B, SMARCA2/BRM, SMARCA4/BRG1/BAF190A, ACTL6A/BAF53, ACTL6B/BAF53B, SMARCE1/BAF57, SMARCC1/BAF155, SMARCC2/BAF170, SMARCB1/SNF5/INI1, and one or more SMARCD1/BAF60A, SMARCD2/BAF60B, or SMARCD3/BAF60C. In muscle cells, the BAF complex also contains DPF3. Component of neural progenitors-specific chromatin remodeling complex (npBAF complex) composed of at least, ARID1A/BAF250A or ARID1B/BAF250B, SMARCD1/BAF60A, SMARCD3/BAF60C, SMARCA2/BRM/BAF190B, SMARCA4/BRG1/BAF190A, SMARCB1/BAF47, SMARCC1/BAF155, SMARCE1/BAF57, SMARCC2/BAF170, PHF10/BAF45A, ACTL6A/BAF53A and actin. Component of neuron-specific chromatin remodeling complex (nBAF complex) composed of at least, ARID1A/BAF250A or ARID1B/BAF250B, SMARCD1/BAF60A, SMARCD3/BAF60C, SMARCA2/BRM/BAF190B, SMARCA4/BRG1/BAF190A, SMARCB1/BAF47, SMARCC1/BAF155, SMARCE1/BAF57, SMARCC2/BAF170, DPF1/BAF45B, DPF3/BAF45C, ACTL6B/BAF53B and actin. Component of a SWI/SNF-like EBAFa complex, at least composed of SMARCA4/BRG1/BAF190A, SMARCB1/BAF47/SNF5, ACTL6A/BAF53A, SMARCE1/BAF57, SMARCD1/BAF60A, SMARCC1/BAF155, SMARCC2/BAF170, BAF250A and MLLT1/ENL. Interacts through its C-terminus with SMARCA2/BRM/BAF190B and SMARCA4/BRG1/BAF190A. Interacts with SMARCC1/BAF155. Interacts with FOS, FOSB isoform 1 and 2, FOSL1 and FOSL2. In terms of tissue distribution, highly expressed in spleen, thymus, prostate, testis, ovary, small intestine, colon, and PBL, and at a much lower level in heart, brain, placenta, lung, liver, skeletal muscle, kidney, and pancreas.

It localises to the nucleus. Involved in transcriptional activation and repression of select genes by chromatin remodeling (alteration of DNA-nucleosome topology). Component of SWI/SNF chromatin remodeling complexes that carry out key enzymatic activities, changing chromatin structure by altering DNA-histone contacts within a nucleosome in an ATP-dependent manner. Binds DNA non-specifically. Belongs to the neural progenitors-specific chromatin remodeling complex (npBAF complex) and the neuron-specific chromatin remodeling complex (nBAF complex). During neural development a switch from a stem/progenitor to a postmitotic chromatin remodeling mechanism occurs as neurons exit the cell cycle and become committed to their adult state. The transition from proliferating neural stem/progenitor cells to postmitotic neurons requires a switch in subunit composition of the npBAF and nBAF complexes. As neural progenitors exit mitosis and differentiate into neurons, npBAF complexes which contain ACTL6A/BAF53A and PHF10/BAF45A, are exchanged for homologous alternative ACTL6B/BAF53B and DPF1/BAF45B or DPF3/BAF45C subunits in neuron-specific complexes (nBAF). The npBAF complex is essential for the self-renewal/proliferative capacity of the multipotent neural stem cells. The nBAF complex along with CREST plays a role regulating the activity of genes essential for dendrite growth. The polypeptide is AT-rich interactive domain-containing protein 1A (ARID1A) (Homo sapiens (Human)).